The following is a 119-amino-acid chain: Insulin growth factor-like family member 2 (119 aa).

An N-terminal signal peptide occupies residues 1 to 25 (MVPRIFAPAYVSVCLLLLCPREVIA).

This sequence belongs to the IGFL family. Detected in cerebellum, heart, placenta, spleen, stomach, testis and thymus.

It is found in the secreted. Functionally, potential ligand of the IGFLR1 cell membrane receptor. The sequence is that of Insulin growth factor-like family member 2 (IGFL2) from Homo sapiens (Human).